Here is a 405-residue protein sequence, read N- to C-terminus: G1/S-specific cyclin-D (405 aa).

Residues 76 to 200 enclose the Cyclin N-terminal domain; the sequence is FYNCMEYEEA…LIVTTLQWET (125 aa). The interval 301–405 is disordered; the sequence is YTSEDAEKTE…STPPKIFKTL (105 aa). Polar residues predominate over residues 311-321; the sequence is PTPSAPASTQE. The segment covering 326 to 335 has biased composition (basic and acidic residues); it reads QELKELKEEP. Residues 358 to 380 are compositionally biased toward polar residues; the sequence is SEQTPSTPLNDSGFSSDVSSPAS.

Belongs to the cyclin family. Cyclin D subfamily. In terms of assembly, interacts with cdk-4; the interaction is likely involved in regulating cdk-4 activity.

Its function is as follows. In association with cdk-4, regulates the progression through the G1 phase of the cell cycle during postembryonic development. Regulates proliferation of the coelomocyte lineage and intestinal cells during late embryogenesis. In complex with cdk-4, involved in sex determination during gonadogenesis by regulating the asymmetric division of the somatic gonadal precursor cell (SGP). The polypeptide is G1/S-specific cyclin-D (Caenorhabditis elegans).